Consider the following 248-residue polypeptide: AA9 family lytic polysaccharide monooxygenase G (248 aa).

Positions Met-1 to Ala-21 are cleaved as a signal peptide. His-22 contacts Cu(2+). Asn-58 is a glycosylation site (N-linked (GlcNAc...) asparagine). Residues Cys-77 and Cys-195 are joined by a disulfide bond. His-107 provides a ligand contact to Cu(2+). Residue Gln-190 participates in O2 binding. A Cu(2+)-binding site is contributed by Tyr-192. Asn-203 carries N-linked (GlcNAc...) asparagine glycosylation.

This sequence belongs to the polysaccharide monooxygenase AA9 family. Cu(2+) is required as a cofactor.

The protein resides in the secreted. The enzyme catalyses [(1-&gt;4)-beta-D-glucosyl]n+m + reduced acceptor + O2 = 4-dehydro-beta-D-glucosyl-[(1-&gt;4)-beta-D-glucosyl]n-1 + [(1-&gt;4)-beta-D-glucosyl]m + acceptor + H2O.. Lytic polysaccharide monooxygenase (LPMO) that depolymerizes crystalline and amorphous polysaccharides via the oxidation of scissile alpha- or beta-(1-4)-glycosidic bonds, yielding C1 or C4 oxidation products. Catalysis by LPMOs requires the reduction of the active-site copper from Cu(II) to Cu(I) by a reducing agent and H(2)O(2) or O(2) as a cosubstrate. In Malbranchea cinnamomea (Thermophilic fungus), this protein is AA9 family lytic polysaccharide monooxygenase G.